Reading from the N-terminus, the 312-residue chain is Src-like-adapter (312 aa).

Residues 1–33 form a disordered region; it reads MLCRLPGPSTSRGEKEMGNSMKSTPAPLERPLS. The region spanning 38–98 is the SH3 domain; sequence LESDFLAVLN…PGICVARVYH (61 aa). The SH2 domain maps to 100 to 191; it reads WLFEGLGRDK…GLCCVLTTPC (92 aa). An SLA C-terminal region spans residues 206 to 312; sequence CTSPGSPVTL…TQKTKALTAT (107 aa). Serine 274 is subject to Phosphoserine.

As to quaternary structure, homodimer. Interacts with phosphorylated CBL, SYK and LAT. Homodimerization and interaction with phosphorylated CBL occurs via its C-terminal domain. Interacts with PDGFRB and EPHA2. Interacts with phosphorylated proteins ZAP70; CD3Z; VAV1 and LCP2 via its SH2 domain. Post-translationally, phosphorylated.

Its subcellular location is the cytoplasm. The protein resides in the endosome. Functionally, adapter protein, which negatively regulates T-cell receptor (TCR) signaling. Inhibits T-cell antigen-receptor induced activation of nuclear factor of activated T-cells. Involved in the negative regulation of positive selection and mitosis of T-cells. May act by linking signaling proteins such as ZAP70 with CBL, leading to a CBL dependent degradation of signaling proteins. The chain is Src-like-adapter (Sla) from Rattus norvegicus (Rat).